Consider the following 298-residue polypeptide: Glycine--tRNA ligase alpha subunit (298 aa).

It belongs to the class-II aminoacyl-tRNA synthetase family. Tetramer of two alpha and two beta subunits.

The protein localises to the cytoplasm. The enzyme catalyses tRNA(Gly) + glycine + ATP = glycyl-tRNA(Gly) + AMP + diphosphate. The polypeptide is Glycine--tRNA ligase alpha subunit (Helicobacter acinonychis (strain Sheeba)).